The sequence spans 275 residues: Phosphite transport system permease protein PtxC (275 aa).

Transmembrane regions (helical) follow at residues 30–50 (LGQV…VGLL), 88–108 (LAMS…VAFV), 136–156 (LIMG…GVLA), 221–241 (ASTV…MGSL), and 249–269 (VAAI…FSGV). Residues 84-267 (LIDTLAMSIA…AMVTLVDAFS (184 aa)) enclose the ABC transmembrane type-1 domain.

The protein belongs to the binding-protein-dependent transport system permease family.

The protein resides in the cell inner membrane. Functionally, probably forms part of a binding-protein-dependent phosphite transporter. Probably responsible for the translocation of the substrate across the membrane. In Stutzerimonas stutzeri (Pseudomonas stutzeri), this protein is Phosphite transport system permease protein PtxC (ptxC).